A 492-amino-acid chain; its full sequence is uncharacterized protein (492 aa).

The N-terminal stretch at 1–22 (MIRPNMFALLMLVVLAITSVNA) is a signal peptide. N-linked (GlcNAc...) asparagine; by host glycosylation is found at Asn92, Asn97, Asn119, Asn146, Asn213, Asn267, and Asn458.

It is found in the secreted. This is an uncharacterized protein from Acanthamoeba polyphaga (Amoeba).